The sequence spans 312 residues: Glyoxylate/hydroxypyruvate reductase A (312 aa).

Residue arginine 227 is part of the active site. Histidine 275 (proton donor) is an active-site residue.

The protein belongs to the D-isomer specific 2-hydroxyacid dehydrogenase family. GhrA subfamily.

It is found in the cytoplasm. The catalysed reaction is glycolate + NADP(+) = glyoxylate + NADPH + H(+). It catalyses the reaction (R)-glycerate + NAD(+) = 3-hydroxypyruvate + NADH + H(+). It carries out the reaction (R)-glycerate + NADP(+) = 3-hydroxypyruvate + NADPH + H(+). Functionally, catalyzes the NADPH-dependent reduction of glyoxylate and hydroxypyruvate into glycolate and glycerate, respectively. This chain is Glyoxylate/hydroxypyruvate reductase A, found in Salmonella heidelberg (strain SL476).